A 521-amino-acid chain; its full sequence is RING-type E3 ubiquitin-protein ligase PPIL2 (521 aa).

Residues 35 to 108 (RRLPFDHCSL…GQYHCPVLYS (74 aa)) form the U-box domain. Residues 197-217 (LKNTNSETRETLQELYKEFKG) are a coiled coil. A Glycyl lysine isopeptide (Lys-Gly) (interchain with G-Cter in SUMO2) cross-link involves residue Lys-216. The 156-residue stretch at 278-433 (KKGYVRLHTN…EEVLICTTTV (156 aa)) folds into the PPIase cyclophilin-type domain. The segment covering 447–462 (QERKKTQHQVDPEAKV) has biased composition (basic and acidic residues). Residues 447–521 (QERKKTQHQV…SRGFGDFSSW (75 aa)) are disordered. The span at 465-478 (SQPQPGNQGPQTYR) shows a compositional bias: polar residues. N6-acetyllysine is present on Lys-483.

It belongs to the cyclophilin-type PPIase family. PPIL2 subfamily. As to quaternary structure, component of the minor spliceosome, which splices U12-type introns. Within this complex, interacts with PRPF8/PRP8, EFTUD2/SNU114 and PLRG1. Interacts with isoform 2 of BSG. Interacts (via the PPIase cyclophilin-type domain) with CRNKL1; they may form a trimeric complex with HSP90.

It localises to the nucleus. The enzyme catalyses S-ubiquitinyl-[E2 ubiquitin-conjugating enzyme]-L-cysteine + [acceptor protein]-L-lysine = [E2 ubiquitin-conjugating enzyme]-L-cysteine + N(6)-ubiquitinyl-[acceptor protein]-L-lysine.. The protein operates within protein modification; protein ubiquitination. Has a ubiquitin-protein ligase activity acting as an E3 ubiquitin protein ligase or as an ubiquitin-ubiquitin ligase promoting elongation of ubiquitin chains on substrates. By mediating 'Lys-48'-linked polyubiquitination of proteins could target them for proteasomal degradation. May also function as a chaperone, playing a role in transport to the cell membrane of BSG/Basigin for instance. Probable inactive PPIase with no peptidyl-prolyl cis-trans isomerase activity. As a component of the minor spliceosome, involved in the splicing of U12-type introns in pre-mRNAs. In Mus musculus (Mouse), this protein is RING-type E3 ubiquitin-protein ligase PPIL2.